A 111-amino-acid polypeptide reads, in one-letter code: Protein BEX5 (111 aa).

Over residues 1–12 (MENVPKENKVVE) the composition is skewed to basic and acidic residues. The disordered stretch occupies residues 1–37 (MENVPKENKVVEKAPVQNEAPALGGGEYQEPGGNVKG). The segment at 100-104 (HHDHH) is his cluster. Cysteine 108 lines the Zn(2+) pocket.

The protein belongs to the BEX family. In terms of processing, ubiquitinated. Degraded by the proteasome.

The protein resides in the cytoplasm. The polypeptide is Protein BEX5 (BEX5) (Homo sapiens (Human)).